The following is a 733-amino-acid chain: EF-hand domain-containing family member C2 (733 aa).

3 consecutive DM10 domains span residues 61-168 (DKQV…TKIG), 212-354 (DRKV…RTKY), and 416-523 (ISNT…ERNS).

In terms of assembly, microtubule inner protein component of sperm flagellar doublet microtubules. As to expression, expressed in trachea multiciliated cells.

The protein localises to the cytoplasm. Its subcellular location is the cytoskeleton. It is found in the cilium axoneme. It localises to the flagellum axoneme. In terms of biological role, microtubule inner protein (MIP) part of the dynein-decorated doublet microtubules (DMTs) in cilia axoneme, which is required for motile cilia beating. The chain is EF-hand domain-containing family member C2 (EFHC2) from Bos taurus (Bovine).